The following is an 80-amino-acid chain: Defensin coprisin (80 aa).

The signal sequence occupies residues 1 to 20; that stretch reads MAKLIAFALVASLCLSMVLC. Residues 21 to 37 constitute a propeptide that is removed on maturation; that stretch reads NPLPEEVQEEGLVRQKR. Cystine bridges form between Cys40-Cys71, Cys57-Cys76, and Cys61-Cys78.

The protein belongs to the invertebrate defensin family. Type 1 subfamily.

It localises to the secreted. The protein localises to the target cell membrane. Its function is as follows. Potent broad-spectrum antibacterial peptide against both Gram-positive (B.subtilis, S.epidermidis, and S.aureus) and Gram-negative bacteria (E.coli, S.typhimurium, and P.aeruginosa). Is also active against all antibiotic-resistant bacterial strains tested. Induces apoptosis in C.albicans, but does not disrupt the fungal plasma membrane at all. Acts by permeabilizing the bacterial cell membrane, but not human membranes. Also shows potent anti-inflammatory activities, since it reduces both LPS-induced nitric oxide release and pro-inflammatory cytokine production. Anti-inflammatory activities are initiated by suppressing the binding of LPS to toll-like receptor 4 (TLR4), and subsequently inhibiting the phosphorylation of p38 mitogen-activated protein kinase (MAPK) and nuclear translocation of NF-kB (TNFRSF11A). Does not show hemolytic activity against human erythrocytes. The chain is Defensin coprisin from Copris tripartitus (Dung beetle).